Reading from the N-terminus, the 138-residue chain is Putative pre-16S rRNA nuclease (138 aa).

This sequence belongs to the YqgF nuclease family.

It is found in the cytoplasm. Its function is as follows. Could be a nuclease involved in processing of the 5'-end of pre-16S rRNA. This is Putative pre-16S rRNA nuclease from Escherichia coli O157:H7.